The primary structure comprises 273 residues: Phosphate import ATP-binding protein PstB (273 aa).

The 240-residue stretch at L19 to A258 folds into the ABC transporter domain. G51 to S58 contributes to the ATP binding site.

It belongs to the ABC transporter superfamily. Phosphate importer (TC 3.A.1.7) family. The complex is composed of two ATP-binding proteins (PstB), two transmembrane proteins (PstC and PstA) and a solute-binding protein (PstS).

It is found in the cell inner membrane. The catalysed reaction is phosphate(out) + ATP + H2O = ADP + 2 phosphate(in) + H(+). Part of the ABC transporter complex PstSACB involved in phosphate import. Responsible for energy coupling to the transport system. The chain is Phosphate import ATP-binding protein PstB from Synechococcus sp. (strain CC9605).